A 227-amino-acid chain; its full sequence is ATP synthase subunit a (227 aa).

Transmembrane regions (helical) follow at residues A16–I36, L79–F99, S105–I125, L176–L196, and V202–I222.

This sequence belongs to the ATPase A chain family. F-type ATPases have 2 components, CF(1) - the catalytic core - and CF(0) - the membrane proton channel. CF(1) has five subunits: alpha(3), beta(3), gamma(1), delta(1), epsilon(1). CF(0) has three main subunits: a(1), b(2) and c(9-12). The alpha and beta chains form an alternating ring which encloses part of the gamma chain. CF(1) is attached to CF(0) by a central stalk formed by the gamma and epsilon chains, while a peripheral stalk is formed by the delta and b chains.

The protein localises to the cell inner membrane. Key component of the proton channel; it plays a direct role in the translocation of protons across the membrane. The polypeptide is ATP synthase subunit a (Campylobacter concisus (strain 13826)).